Consider the following 286-residue polypeptide: Bifunctional protein FolD (286 aa).

Residues 165 to 167 (GRS), Ser190, and Val231 each bind NADP(+).

This sequence belongs to the tetrahydrofolate dehydrogenase/cyclohydrolase family. In terms of assembly, homodimer.

It carries out the reaction (6R)-5,10-methylene-5,6,7,8-tetrahydrofolate + NADP(+) = (6R)-5,10-methenyltetrahydrofolate + NADPH. The catalysed reaction is (6R)-5,10-methenyltetrahydrofolate + H2O = (6R)-10-formyltetrahydrofolate + H(+). It functions in the pathway one-carbon metabolism; tetrahydrofolate interconversion. Functionally, catalyzes the oxidation of 5,10-methylenetetrahydrofolate to 5,10-methenyltetrahydrofolate and then the hydrolysis of 5,10-methenyltetrahydrofolate to 10-formyltetrahydrofolate. This chain is Bifunctional protein FolD, found in Bacillus cereus (strain B4264).